We begin with the raw amino-acid sequence, 105 residues long: U2-lycotoxin-Ls1c (105 aa).

Positions 1–17 are cleaved as a signal peptide; sequence MIKYVLISALLVVAVYS. A propeptide spanning residues 18 to 41 is cleaved from the precursor; the sequence is FTIEDSEDALLEEAEDELDTEEER. 4 disulfide bridges follow: Cys-51-Cys-67, Cys-58-Cys-97, Cys-60-Cys-83, and Cys-69-Cys-81.

The protein belongs to the neurotoxin 04 (omega-agtx) family. 01 (type I omega-agtx) subfamily. As to expression, expressed by the venom gland.

It localises to the secreted. In terms of biological role, insecticidal to house crickets. It induces an excitatory slow-onset impact that leads to irreversible spastic paralysis. It also modifies human voltage-gated potassium channel Kv1.5/KCNA5. Most likely, it binds to the voltage-sensing domain of the channel, suggesting it does not block the pore but prevents its opening at physiological membrane potentials. The recombinant peptide binds to the channel in an irreversible manner and slows down the hKv1.5 current activation kinetics. It is not toxic to mice, when intracranially injected (at 0.5 ug/g mouse). The polypeptide is U2-lycotoxin-Ls1c (Lycosa singoriensis (Wolf spider)).